The primary structure comprises 416 residues: Multifunctional CCA protein (416 aa).

ATP-binding residues include Gly-8 and Arg-11. Residues Gly-8 and Arg-11 each contribute to the CTP site. The Mg(2+) site is built by Asp-21 and Asp-23. 3 residues coordinate ATP: Arg-91, Arg-137, and Arg-140. CTP contacts are provided by Arg-91, Arg-137, and Arg-140. An HD domain is found at 228–329 (TGVHTLMVLA…VKIFDKADFW (102 aa)).

The protein belongs to the tRNA nucleotidyltransferase/poly(A) polymerase family. Bacterial CCA-adding enzyme type 1 subfamily. In terms of assembly, monomer. Can also form homodimers and oligomers. Requires Mg(2+) as cofactor. The cofactor is Ni(2+).

The enzyme catalyses a tRNA precursor + 2 CTP + ATP = a tRNA with a 3' CCA end + 3 diphosphate. It catalyses the reaction a tRNA with a 3' CCA end + 2 CTP + ATP = a tRNA with a 3' CCACCA end + 3 diphosphate. Its function is as follows. Catalyzes the addition and repair of the essential 3'-terminal CCA sequence in tRNAs without using a nucleic acid template. Adds these three nucleotides in the order of C, C, and A to the tRNA nucleotide-73, using CTP and ATP as substrates and producing inorganic pyrophosphate. tRNA 3'-terminal CCA addition is required both for tRNA processing and repair. Also involved in tRNA surveillance by mediating tandem CCA addition to generate a CCACCA at the 3' terminus of unstable tRNAs. While stable tRNAs receive only 3'-terminal CCA, unstable tRNAs are marked with CCACCA and rapidly degraded. The sequence is that of Multifunctional CCA protein from Shewanella baltica (strain OS155 / ATCC BAA-1091).